The following is a 362-amino-acid chain: Dual-specificity RNA methyltransferase RlmN (362 aa).

The active-site Proton acceptor is Glu-91. Residues Glu-97 to Asp-333 enclose the Radical SAM core domain. Cys-104 and Cys-338 are disulfide-bonded. Positions 111, 115, and 118 each coordinate [4Fe-4S] cluster. Residues Gly-164–Glu-165, Ser-196, Ser-218–His-220, and Asn-295 contribute to the S-adenosyl-L-methionine site. Cys-338 acts as the S-methylcysteine intermediate in catalysis.

It belongs to the radical SAM superfamily. RlmN family. The cofactor is [4Fe-4S] cluster.

It localises to the cytoplasm. It catalyses the reaction adenosine(2503) in 23S rRNA + 2 reduced [2Fe-2S]-[ferredoxin] + 2 S-adenosyl-L-methionine = 2-methyladenosine(2503) in 23S rRNA + 5'-deoxyadenosine + L-methionine + 2 oxidized [2Fe-2S]-[ferredoxin] + S-adenosyl-L-homocysteine. It carries out the reaction adenosine(37) in tRNA + 2 reduced [2Fe-2S]-[ferredoxin] + 2 S-adenosyl-L-methionine = 2-methyladenosine(37) in tRNA + 5'-deoxyadenosine + L-methionine + 2 oxidized [2Fe-2S]-[ferredoxin] + S-adenosyl-L-homocysteine. Functionally, specifically methylates position 2 of adenine 2503 in 23S rRNA and position 2 of adenine 37 in tRNAs. m2A2503 modification seems to play a crucial role in the proofreading step occurring at the peptidyl transferase center and thus would serve to optimize ribosomal fidelity. This is Dual-specificity RNA methyltransferase RlmN from Methylobacillus flagellatus (strain ATCC 51484 / DSM 6875 / VKM B-1610 / KT).